The primary structure comprises 372 residues: Saccharopine dehydrogenase [NAD(+), L-lysine-forming] (372 aa).

L-saccharopine is bound by residues Arg17 and Lys76. Lys76 serves as the catalytic Proton acceptor. Catalysis depends on His95, which acts as the Proton donor. Residue Gln100 coordinates L-saccharopine. Arg129 contributes to the NAD(+) binding site. Positions 130 and 134 each coordinate L-saccharopine. Residues 202–203 (GR), Asp226, Thr230, Tyr250, and Val277 each bind NAD(+). Cysteines 204 and 248 form a disulfide. Residue 278–280 (SAD) coordinates L-saccharopine. NAD(+) is bound at residue 317–320 (IDHL). Positions 370–372 (SKL) match the Microbody targeting signal motif.

This sequence belongs to the AlaDH/PNT family. As to quaternary structure, monomer.

The protein localises to the peroxisome. The catalysed reaction is L-saccharopine + NAD(+) + H2O = L-lysine + 2-oxoglutarate + NADH + H(+). Its pathway is amino-acid biosynthesis; L-lysine biosynthesis via AAA pathway; L-lysine from L-alpha-aminoadipate (fungal route): step 3/3. Functionally, catalyzes the NAD(+)-dependent cleavage of saccharopine to L-lysine and 2-oxoglutarate, the final step in the alpha-aminoadipate (AAA) pathway for lysin biosynthesis. The protein is Saccharopine dehydrogenase [NAD(+), L-lysine-forming] (LYS1) of Candida glabrata (strain ATCC 2001 / BCRC 20586 / JCM 3761 / NBRC 0622 / NRRL Y-65 / CBS 138) (Yeast).